A 104-amino-acid chain; its full sequence is Pyrimidine/purine nucleoside phosphorylase (104 aa).

It belongs to the nucleoside phosphorylase PpnP family.

It catalyses the reaction a purine D-ribonucleoside + phosphate = a purine nucleobase + alpha-D-ribose 1-phosphate. It carries out the reaction adenosine + phosphate = alpha-D-ribose 1-phosphate + adenine. The catalysed reaction is cytidine + phosphate = cytosine + alpha-D-ribose 1-phosphate. The enzyme catalyses guanosine + phosphate = alpha-D-ribose 1-phosphate + guanine. It catalyses the reaction inosine + phosphate = alpha-D-ribose 1-phosphate + hypoxanthine. It carries out the reaction thymidine + phosphate = 2-deoxy-alpha-D-ribose 1-phosphate + thymine. The catalysed reaction is uridine + phosphate = alpha-D-ribose 1-phosphate + uracil. The enzyme catalyses xanthosine + phosphate = alpha-D-ribose 1-phosphate + xanthine. Functionally, catalyzes the phosphorolysis of diverse nucleosides, yielding D-ribose 1-phosphate and the respective free bases. Can use uridine, adenosine, guanosine, cytidine, thymidine, inosine and xanthosine as substrates. Also catalyzes the reverse reactions. The protein is Pyrimidine/purine nucleoside phosphorylase of Leptothrix cholodnii (strain ATCC 51168 / LMG 8142 / SP-6) (Leptothrix discophora (strain SP-6)).